The primary structure comprises 78 residues: Bowman-Birk type proteinase inhibitors I-A, I-B, and I-A' (78 aa).

7 cysteine pairs are disulfide-bonded: cysteine 18-cysteine 72, cysteine 19-cysteine 34, cysteine 22-cysteine 68, cysteine 24-cysteine 32, cysteine 42-cysteine 49, cysteine 46-cysteine 61, and cysteine 51-cysteine 59.

Belongs to the Bowman-Birk serine protease inhibitor family.

In terms of biological role, these inhibitors strongly inhibit trypsin. The chain is Bowman-Birk type proteinase inhibitors I-A, I-B, and I-A' from Phaseolus angularis (Azuki bean).